Reading from the N-terminus, the 407-residue chain is MSVEGKNVDSYSGLTASVQHEHTHPVHNRGVALETTTQHAFITVASQLKPDLKGEDEEHNLELELHKFLSQHNHGPPSSGTTGTTLAGVPDFSASHNISHRDEMAEAIEKAMAEIACPELWNNDHSSAGATVGGDVHLDTLTMDGILGNEEPFVQVHEGALGSVDMDGQRYPHGRNSLSSIVGSKAIIQQSMDIHPTAQGGARSRQSTEEVGMHICATPNGKRKNAGVASSQATVKRSRLFYETISPESLSPLSDNSDFLKAMDTKGSGVQNVPISTSVTAGALGHGAKNIKGYQNASKINMASNIPKEKLQVHSTPPVVSILPEKLTQEFTMQQVMETKRRIINTHKLILNFNFLKESYTRSCSELKRTVFKLKESECHRARLAKENEQLKRLVIELNERMKNPSK.

The protein localises to the cytoplasm. It localises to the nucleus. In terms of biological role, involved in cation homeostasis and in the regulation of the cation stress signaling cascades. The chain is Protein ATC1/LIC4 (ATC1) from Eremothecium gossypii (strain ATCC 10895 / CBS 109.51 / FGSC 9923 / NRRL Y-1056) (Yeast).